We begin with the raw amino-acid sequence, 164 residues long: MAKNNVVKAQGTDLYFIDPDTHVVMNAGCITSLSGIDTSIDQIETTCLNETARSYVAGLATPGTATFSINTNPQDPVHIRLLELKNAGVSLDWAVGWSDGTSAPTAVLDSSGEYDFDVPADRSWLLFEGYMNSFSFEFAQNAVVTSSIGIQVSGEPVLIPKSTS.

It is found in the virion. Structural protein. The sequence is that of Structural protein 3 from Pseudomonas phage PAJU2.